The chain runs to 336 residues: Glycerol-3-phosphate dehydrogenase [NAD(P)+] (336 aa).

4 residues coordinate NADPH: serine 16, tyrosine 17, histidine 37, and lysine 111. 3 residues coordinate sn-glycerol 3-phosphate: lysine 111, glycine 140, and threonine 142. Alanine 144 contributes to the NADPH binding site. Sn-glycerol 3-phosphate contacts are provided by lysine 196, aspartate 249, serine 259, arginine 260, and asparagine 261. Lysine 196 functions as the Proton acceptor in the catalytic mechanism. Arginine 260 contributes to the NADPH binding site. NADPH is bound by residues valine 284 and glutamate 286.

Belongs to the NAD-dependent glycerol-3-phosphate dehydrogenase family.

It localises to the cytoplasm. It carries out the reaction sn-glycerol 3-phosphate + NAD(+) = dihydroxyacetone phosphate + NADH + H(+). It catalyses the reaction sn-glycerol 3-phosphate + NADP(+) = dihydroxyacetone phosphate + NADPH + H(+). Its pathway is membrane lipid metabolism; glycerophospholipid metabolism. Its function is as follows. Catalyzes the reduction of the glycolytic intermediate dihydroxyacetone phosphate (DHAP) to sn-glycerol 3-phosphate (G3P), the key precursor for phospholipid synthesis. This is Glycerol-3-phosphate dehydrogenase [NAD(P)+] from Actinobacillus pleuropneumoniae serotype 5b (strain L20).